The sequence spans 672 residues: Poly-beta-1,6-N-acetyl-D-glucosamine N-deacetylase (672 aa).

Positions 1-20 (MLRNGNKYLLMLVSIIMLTA) are cleaved as a signal peptide. A lipid anchor (N-palmitoyl cysteine) is attached at Cys-21. Cys-21 carries the S-diacylglycerol cysteine lipid modification. Residues 107–349 (KAVVLTFDDG…IQRVKDMQIS (243 aa)) form the NodB homology domain.

Belongs to the polysaccharide deacetylase family.

The protein resides in the cell outer membrane. In terms of biological role, catalyzes the N-deacetylation of poly-beta-1,6-N-acetyl-D-glucosamine (PGA), a biofilm adhesin polysaccharide. N-deacetylation promotes PGA export through the PgaA porin. The protein is Poly-beta-1,6-N-acetyl-D-glucosamine N-deacetylase (pgaB) of Escherichia coli O157:H7.